The chain runs to 335 residues: Tyrosine-protein phosphatase 1 (335 aa).

Residues 15–328 form the Tyrosine-protein phosphatase domain; the sequence is LLGKFKFIQN…LFIYHAAKYL (314 aa). Phosphoserine; by CLK1 is present on Ser-83. The active-site Phosphocysteine intermediate is Cys-252.

This sequence belongs to the protein-tyrosine phosphatase family. Non-receptor class subfamily. Post-translationally, activated by phosphorylation at Ser-83.

The protein resides in the cytoplasm. The catalysed reaction is O-phospho-L-tyrosyl-[protein] + H2O = L-tyrosyl-[protein] + phosphate. Its function is as follows. Is not required for vegetative growth. This chain is Tyrosine-protein phosphatase 1 (PTP1), found in Saccharomyces cerevisiae (strain ATCC 204508 / S288c) (Baker's yeast).